Consider the following 24-residue polypeptide: Small ribosomal subunit protein uS5 (24 aa).

It belongs to the universal ribosomal protein uS5 family. As to quaternary structure, part of the 30S ribosomal subunit. Contacts proteins S4 and S8.

Functionally, with S4 and S12 plays an important role in translational accuracy. Located at the back of the 30S subunit body where it stabilizes the conformation of the head with respect to the body. This is Small ribosomal subunit protein uS5 (rpsE) from Vibrio proteolyticus (Aeromonas proteolytica).